Reading from the N-terminus, the 346-residue chain is Cell shape-determining protein MreC (346 aa).

Residues 89–118 are a coiled coil; the sequence is NRRLKAELAEMRQWRDRALALQDQNDRFKS. Positions 292–346 are disordered; sequence SLPPVTTEDPQTSILSNPVSRPVAPTPSPATATPSAAPAARPATTATPPQTGAPR. A compositionally biased stretch (polar residues) spans 299–308; the sequence is EDPQTSILSN. Over residues 309–340 the composition is skewed to low complexity; sequence PVSRPVAPTPSPATATPSAAPAARPATTATPP.

Belongs to the MreC family. As to quaternary structure, interacts with penicillin-binding proteins (PBP2, PBP1a, PBP1b, PBP2a and PBP2b). Interacts with outer membrane proteins belonging to the TonB-dependent receptor family of transport proteins.

It is found in the periplasm. Involved in formation and maintenance of cell shape. Required for the spatial organization of components of the peptidoglycan-synthesizing holoenzyme in the periplasm and peptidoglycan synthetic activity. This Caulobacter vibrioides (strain NA1000 / CB15N) (Caulobacter crescentus) protein is Cell shape-determining protein MreC.